A 452-amino-acid chain; its full sequence is Netrin-5 (452 aa).

A signal peptide spans 1–34; sequence MTDYRTLFSSPGAGSTVTTPITLSLLLLLSQATS. 11 cysteine pairs are disulfide-bonded: C173/C182, C175/C191, C193/C202, C205/C225, C228/C240, C230/C247, C249/C258, C261/C275, C298/C376, C302/C378, and C317/C438. Laminin EGF-like domains lie at 173–227 and 228–277; these read CQCH…PCLP and CQCH…PCQR. The NTR domain maps to 298–438; that stretch reads CQGYCNVSVS…LQQKERGGAC (141 aa). The N-linked (GlcNAc...) asparagine glycan is linked to N303.

The protein resides in the secreted. Its function is as follows. Plays a role in neurogenesis. Prevents motor neuron cell body migration out of the neural tube. The polypeptide is Netrin-5 (Ntn5) (Mus musculus (Mouse)).